The primary structure comprises 400 residues: Enoyl-[acyl-carrier-protein] reductase [NADH] (400 aa).

Residues 48 to 53, 74 to 75, 111 to 112, and 139 to 140 each bind NAD(+); these read GSSSGY, FE, DA, and LA. Y225 is a substrate binding site. Catalysis depends on Y235, which acts as the Proton donor. NAD(+)-binding positions include K244 and 273 to 275; that span reads VVT.

Belongs to the TER reductase family. As to quaternary structure, monomer.

It carries out the reaction a 2,3-saturated acyl-[ACP] + NAD(+) = a (2E)-enoyl-[ACP] + NADH + H(+). The protein operates within lipid metabolism; fatty acid biosynthesis. In terms of biological role, involved in the final reduction of the elongation cycle of fatty acid synthesis (FAS II). Catalyzes the reduction of a carbon-carbon double bond in an enoyl moiety that is covalently linked to an acyl carrier protein (ACP). This Aliivibrio fischeri (strain ATCC 700601 / ES114) (Vibrio fischeri) protein is Enoyl-[acyl-carrier-protein] reductase [NADH].